The sequence spans 304 residues: uncharacterized protein (304 aa).

72-79 (GPTGSGKT) is a binding site for ATP.

It belongs to the CbbQ/NirQ/NorQ/GpvN family.

This is an uncharacterized protein from Bacillus subtilis (strain 168).